A 258-amino-acid chain; its full sequence is Indole-3-glycerol phosphate synthase (258 aa).

It belongs to the TrpC family.

It carries out the reaction 1-(2-carboxyphenylamino)-1-deoxy-D-ribulose 5-phosphate + H(+) = (1S,2R)-1-C-(indol-3-yl)glycerol 3-phosphate + CO2 + H2O. The protein operates within amino-acid biosynthesis; L-tryptophan biosynthesis; L-tryptophan from chorismate: step 4/5. The chain is Indole-3-glycerol phosphate synthase from Legionella pneumophila (strain Paris).